Here is a 333-residue protein sequence, read N- to C-terminus: Uroporphyrinogen decarboxylase (333 aa).

Substrate-binding positions include 22-26 (RQAGR), D71, Y145, S200, and H310.

It belongs to the uroporphyrinogen decarboxylase family. In terms of assembly, homodimer.

It is found in the cytoplasm. It carries out the reaction uroporphyrinogen III + 4 H(+) = coproporphyrinogen III + 4 CO2. The protein operates within porphyrin-containing compound metabolism; protoporphyrin-IX biosynthesis; coproporphyrinogen-III from 5-aminolevulinate: step 4/4. Functionally, catalyzes the decarboxylation of four acetate groups of uroporphyrinogen-III to yield coproporphyrinogen-III. In Thermoplasma acidophilum (strain ATCC 25905 / DSM 1728 / JCM 9062 / NBRC 15155 / AMRC-C165), this protein is Uroporphyrinogen decarboxylase.